Here is a 527-residue protein sequence, read N- to C-terminus: Eukaryotic translation initiation factor 4B1 (527 aa).

Disordered regions lie at residues 1 to 370 (MAKP…REVV) and 453 to 527 (FGQR…RQGW). 2 stretches are compositionally biased toward low complexity: residues 35–45 (AAAGGAASFPS) and 74–85 (GAAGAPRRVAPA). Composition is skewed to basic and acidic residues over residues 102–155 (PRER…DNWG) and 181–194 (RSDDIDNWSRDKKP). The Nuclear localization signal signature appears at 196-203 (PSRYPSLG). Residues 203–232 (GTGGGFRESSGGGFRESSGGGFRESSGGGF) are compositionally biased toward gly residues. The span at 293-317 (KPREEVLAEKGLDWRKMEGEIEKKT) shows a compositional bias: basic and acidic residues. Residues 319–336 (RPTSSHSSRPNSAHSSRP) show a composition bias toward low complexity. Basic and acidic residues-rich tracts occupy residues 472–485 (EEPHVAVAHMDRPR) and 496–510 (PVEERWGFHGSRERG). Residues 518 to 527 (SDRSSTRQGW) show a composition bias toward low complexity.

This sequence belongs to the eIF-4 subunit B family. In terms of assembly, homodimer. Nonspherical monomer. mRNA-discriminating component of initiation complexes. In terms of processing, phosphorylated.

The protein localises to the nucleus. Functionally, promotes the eIF4F and eIF4A RNA-dependent ATP-hydrolysis activity with different efficiency depending on mRNAs, thus providing mRNA discrimination during initiation of translation. The chain is Eukaryotic translation initiation factor 4B1 from Triticum aestivum (Wheat).